Consider the following 101-residue polypeptide: Phosphoribosyl-AMP cyclohydrolase (101 aa).

Aspartate 71 provides a ligand contact to Mg(2+). Cysteine 72 lines the Zn(2+) pocket. The Mg(2+) site is built by aspartate 73 and aspartate 75. Residues cysteine 88 and cysteine 95 each coordinate Zn(2+).

This sequence belongs to the PRA-CH family. As to quaternary structure, homodimer. Mg(2+) serves as cofactor. It depends on Zn(2+) as a cofactor.

The protein resides in the cytoplasm. The catalysed reaction is 1-(5-phospho-beta-D-ribosyl)-5'-AMP + H2O = 1-(5-phospho-beta-D-ribosyl)-5-[(5-phospho-beta-D-ribosylamino)methylideneamino]imidazole-4-carboxamide. It functions in the pathway amino-acid biosynthesis; L-histidine biosynthesis; L-histidine from 5-phospho-alpha-D-ribose 1-diphosphate: step 3/9. In terms of biological role, catalyzes the hydrolysis of the adenine ring of phosphoribosyl-AMP. The sequence is that of Phosphoribosyl-AMP cyclohydrolase from Bacillus cereus (strain ZK / E33L).